Consider the following 449-residue polypeptide: uncharacterized protein (449 aa).

2 disordered regions span residues 1–58 (MVKR…SLSS) and 71–125 (EALE…VVEL). Positions 30–46 (KQRDELREKQKRKREDS) are enriched in basic and acidic residues. The segment covering 103–124 (SDDDDDDNEEEDDNGFEDQVVE) has biased composition (acidic residues).

It belongs to the bystin family.

This is an uncharacterized protein from Caenorhabditis elegans.